A 104-amino-acid chain; its full sequence is Large ribosomal subunit protein bL21 (104 aa).

This sequence belongs to the bacterial ribosomal protein bL21 family. In terms of assembly, part of the 50S ribosomal subunit. Contacts protein L20.

Its function is as follows. This protein binds to 23S rRNA in the presence of protein L20. This chain is Large ribosomal subunit protein bL21, found in Helicobacter pylori (strain P12).